Consider the following 639-residue polypeptide: UvrABC system protein C (639 aa).

The segment covering 1–16 has biased composition (acidic residues); that stretch reads MTDLPVDEPDRDDGAD. The disordered stretch occupies residues 1-28; that stretch reads MTDLPVDEPDRDDGADQPDAGADPATPR. Over residues 17–27 the composition is skewed to low complexity; the sequence is QPDAGADPATP. Residues 42–120 form the GIY-YIG domain; it reads SSPGVYRMID…IKKLKPRYNI (79 aa). The UVR domain occupies 230-265; the sequence is KALQHDLAKRMDEAAQALDYEQAAIFRDRIKALTNV.

The protein belongs to the UvrC family. As to quaternary structure, interacts with UvrB in an incision complex.

Its subcellular location is the cytoplasm. Functionally, the UvrABC repair system catalyzes the recognition and processing of DNA lesions. UvrC both incises the 5' and 3' sides of the lesion. The N-terminal half is responsible for the 3' incision and the C-terminal half is responsible for the 5' incision. In Rhodospirillum rubrum (strain ATCC 11170 / ATH 1.1.1 / DSM 467 / LMG 4362 / NCIMB 8255 / S1), this protein is UvrABC system protein C.